Consider the following 490-residue polypeptide: AP-5 complex subunit mu-1 (490 aa).

Residues 206 to 476 (KPQVSISITE…LISSDYYIWN (271 aa)) form the MHD domain.

This sequence belongs to the adaptor complexes medium subunit family. In terms of assembly, probably part of the adaptor protein complex 5 (AP-5) a tetramer composed of AP5B1, AP5M1, AP5S1 and AP5Z1.

The protein resides in the cytoplasm. The protein localises to the cytosol. It localises to the late endosome membrane. Its subcellular location is the lysosome membrane. In terms of biological role, as part of AP-5, a probable fifth adaptor protein complex it may be involved in endosomal transport. The polypeptide is AP-5 complex subunit mu-1 (AP5M1) (Macaca fascicularis (Crab-eating macaque)).